A 158-amino-acid chain; its full sequence is Glycine/sarcosine/betaine reductase complex component A1 (158 aa).

Selenocysteine 46 is an active-site residue. Position 46 (selenocysteine 46) is a non-standard amino acid, selenocysteine.

It belongs to the GrdA family. In terms of assembly, monomer. Component of the glycine, sarcosine and betaine reductase complexes, together with components B and C.

The enzyme catalyses acetyl phosphate + [thioredoxin]-disulfide + NH4(+) + H2O = [thioredoxin]-dithiol + glycine + phosphate + H(+). The catalysed reaction is acetyl phosphate + methylamine + [thioredoxin]-disulfide + H2O = sarcosine + [thioredoxin]-dithiol + phosphate + H(+). It carries out the reaction acetyl phosphate + trimethylamine + [thioredoxin]-disulfide + H2O = glycine betaine + [thioredoxin]-dithiol + phosphate + H(+). Its function is as follows. In the first step of glycine, betaine and sarcosine reductases, the substrate is bound to component PB via a Schiff base intermediate. Then the PB-activated substrate is nucleophilically attacked by the selenol anion of component PA to transform it to a carboxymethylated selenoether and the respective amine. By action of component PC, acetyl phosphate is formed, leaving component PA in its oxidized state. Finally component PA becomes reduced by the thioredoxin system to start a new catalytic cycle of reductive deamination. The protein is Glycine/sarcosine/betaine reductase complex component A1 (grdA1) of Photobacterium profundum (strain SS9).